The primary structure comprises 598 residues: Elongation factor 4 (598 aa).

Positions 4-181 (KKIRNFAIIA…AIVNLIPPPQ (178 aa)) constitute a tr-type G domain. GTP is bound by residues 16–21 (DHGKST) and 128–131 (NKID).

It belongs to the TRAFAC class translation factor GTPase superfamily. Classic translation factor GTPase family. LepA subfamily.

The protein resides in the cell membrane. It catalyses the reaction GTP + H2O = GDP + phosphate + H(+). Required for accurate and efficient protein synthesis under certain stress conditions. May act as a fidelity factor of the translation reaction, by catalyzing a one-codon backward translocation of tRNAs on improperly translocated ribosomes. Back-translocation proceeds from a post-translocation (POST) complex to a pre-translocation (PRE) complex, thus giving elongation factor G a second chance to translocate the tRNAs correctly. Binds to ribosomes in a GTP-dependent manner. The polypeptide is Elongation factor 4 (Mesomycoplasma hyopneumoniae (strain J / ATCC 25934 / NCTC 10110) (Mycoplasma hyopneumoniae)).